The chain runs to 632 residues: CREB-regulated transcription coactivator 3 (632 aa).

Ser-66 is modified (phosphoserine). The span at 105-115 (NRLHSSHHRPV) shows a compositional bias: basic residues. Residues 105 to 156 (NRLHSSHHRPVEKHGRQCDSSPYGSVYLSPPPDNNWRRTNSDSALHTSASSS) form a disordered region. The residue at position 133 (Ser-133) is a Phosphoserine. Ser-145 carries the post-translational modification Phosphoserine; by SIK2. Low complexity predominate over residues 145–156 (SDSALHTSASSS). A Phosphothreonine modification is found at Thr-151. The residue at position 293 (Ser-293) is a Phosphoserine. Positions 310 to 338 (GIQNTCSNPSIQATMNNNVNNHTPPGRNN) are enriched in polar residues. The interval 310-455 (GIQNTCSNPS…ESQNFQPPSP (146 aa)) is disordered. The span at 339–360 (PTLHPSLRLSSLSNPSLPTSAL) shows a compositional bias: low complexity. Residues Ser-372 and Ser-391 each carry the phosphoserine modification. A compositionally biased stretch (polar residues) spans 372–405 (SPLTLTPGSESNRSISNQFSPTSPMDMLPNSQGV). Over residues 413–424 (SLPPLEPPPPYP) the composition is skewed to pro residues. The segment covering 425–440 (LYTDQPQPQLHHTQQQ) has biased composition (low complexity). Ser-556 is subject to Phosphoserine.

It belongs to the TORC family. As to quaternary structure, binding, as a tetramer, through its N-terminal region, with the bZIP domain of creb1 enhances recruitment of taf4 to the promoter. 'Arg-300' in the bZIP domain of creb1 is essential for this interaction.

It localises to the nucleus. The protein resides in the cytoplasm. In terms of biological role, transcriptional coactivator for creb1 which activates transcription through both consensus and variant cAMP response element (CRE) sites. Acts as a coactivator, in the SIK/TORC signaling pathway, being active when dephosphorylated and acts independently of creb1 'Ser-119' phosphorylation. Enhances the interaction of creb1 with taf4. Regulates the expression of specific CREB-activated genes such as the steroidogenic gene, StAR. Potent coactivator of ppargc1a and inducer of mitochondrial biogenesis in muscle cells. The sequence is that of CREB-regulated transcription coactivator 3 (crtc3) from Xenopus laevis (African clawed frog).